Here is a 270-residue protein sequence, read N- to C-terminus: Elongation factor Tu (270 aa).

One can recognise a tr-type G domain in the interval 1-103 (GILVVSAADG…AVDDYIPTPE (103 aa)). 35–38 (NKVD) is a binding site for GTP.

This sequence belongs to the TRAFAC class translation factor GTPase superfamily. Classic translation factor GTPase family. EF-Tu/EF-1A subfamily. As to quaternary structure, monomer.

Its subcellular location is the cytoplasm. It carries out the reaction GTP + H2O = GDP + phosphate + H(+). GTP hydrolase that promotes the GTP-dependent binding of aminoacyl-tRNA to the A-site of ribosomes during protein biosynthesis. This Staphylococcus warneri protein is Elongation factor Tu (tuf).